The chain runs to 245 residues: Extracellular protein ARB_04177 (245 aa).

It localises to the secreted. The polypeptide is Extracellular protein ARB_04177 (Arthroderma benhamiae (strain ATCC MYA-4681 / CBS 112371) (Trichophyton mentagrophytes)).